The following is a 1277-amino-acid chain: Neural cell adhesion molecule L1 (1277 aa).

Positions 1 to 34 (MAHTQRQQGGSRGQWSRCLLLLLLLPLAAQPGRA) are cleaved as a signal peptide. Residues 35-1135 (AIQIPSSYYI…VQPSFATQGW (1101 aa)) lie on the Extracellular side of the membrane. Ig-like C2-type domains follow at residues 51–140 (PAIT…TAVS), 150–241 (PPVQ…EPIT), 256–344 (PQMM…YTVT), 349–437 (PYWT…TNVY), and 443–528 (PQIL…AEVE). Cystine bridges form between Cys-72-Cys-129, Cys-173-Cys-224, Cys-280-Cys-328, Cys-370-Cys-421, and Cys-465-Cys-514. N-linked (GlcNAc...) asparagine glycosylation is present at Asn-317. Residues Asn-503, Asn-520, and Asn-531 are each glycosylated (N-linked (GlcNAc...) asparagine). The Ig-like C2-type 6 domain maps to 532–623 (RTVILSPPQA…DMVEASSTLT (92 aa)). The cysteines at positions 554 and 607 are disulfide-linked. 5 consecutive Fibronectin type-III domains span residues 630-725 (PPVH…TPAD), 730-824 (NPED…SGED), 829-931 (APLN…TPEG), 935-1030 (PPMS…TLEG), and 1032-1129 (PPAN…VQPS). The disordered stretch occupies residues 714–740 (SKLSDLYKTPADAPDSNPEDVRSESTD). 2 N-linked (GlcNAc...) asparagine glycosylation sites follow: Asn-794 and Asn-839. 5 N-linked (GlcNAc...) asparagine glycosylation sites follow: Asn-1035, Asn-1046, Asn-1068, Asn-1083, and Asn-1108. Residues 1136 to 1156 (FIGVVSAVVLLLLVLLILCFI) traverse the membrane as a helical segment. Residues 1157 to 1277 (KRSKGGKYSV…ATNGAPSFLN (121 aa)) are Cytoplasmic-facing. 2 disordered regions span residues 1163-1216 (KYSV…LCSE) and 1232-1277 (NMDE…SFLN). Basic and acidic residues predominate over residues 1165-1201 (SVKDKEDGPMDSEARPMKDETFGEYRSLESDLEEKRT). Residues 1232–1242 (NMDESLASQFS) show a composition bias toward polar residues. Residues 1255 to 1277 (PDNSPLNPAANPPATNGAPSFLN) show a composition bias toward low complexity.

Belongs to the immunoglobulin superfamily. L1/neurofascin/NgCAM family.

It localises to the cell membrane. Its subcellular location is the cell projection. The protein localises to the growth cone. In terms of biological role, neural cell adhesion molecule involved in the dynamics of cell adhesion and in the generation of transmembrane signals at tyrosine kinase receptors. During brain development, critical in multiple processes, including neuronal migration, axonal growth and fasciculation, and synaptogenesis. In the mature brain, plays a role in the dynamics of neuronal structure and function, including synaptic plasticity. This is Neural cell adhesion molecule L1 (l1cam) from Takifugu rubripes (Japanese pufferfish).